The primary structure comprises 324 residues: MALGPSPYYGVSFFQFFSVFFSRLFSGSLFTGSLYIDDIQIIVFLAISCSGAFAGTFLVLRKMAMYANAVSHTVLFGLVCVCLFTHQLTTLSLGTLTLAAMATAMLTGFLIYFIRNTFKVSEESSTALVFSLLFSLSLVLLVFMTKNAHIGTELVLGNADSLTKEDIFPVTIVILANAVITIFAFRSLVCSSFDSVFASSLGIPIRLVDYLIIFQLSACLVGAFKAVGVLMALAFLIIPSLIAKVIAKSIRSLMAWSLVFSIGTAFLAPASSRAILSAYDLGLSTSGISVVFLTMMYIVVKFISYFRGYFSKNFEKISEKSSQY.

Transmembrane regions (helical) follow at residues 1-21 (MALG…SVFF), 39-59 (IQII…TFLV), 64-84 (AMYA…VCLF), 94-114 (GTLT…IYFI), 125-145 (STAL…VFMT), 165-185 (EDIF…IFAF), 201-221 (LGIP…ACLV), 226-246 (AVGV…AKVI), 252-272 (SLMA…PASS), and 286-306 (SGIS…ISYF).

It belongs to the ABC-3 integral membrane protein family.

Its subcellular location is the cell inner membrane. Part of an ATP-driven transport system CPn_0346/CPn_0347/CPn_0348/CPn_0349 for a metal. This Chlamydia pneumoniae (Chlamydophila pneumoniae) protein is Probable metal transport system membrane protein CPn_0346/CP_0414/CPj0346/CpB0353.